Reading from the N-terminus, the 141-residue chain is Fluoride-specific ion channel FluC 1 (141 aa).

Transmembrane regions (helical) follow at residues 12–32, 44–64, 79–99, and 107–127; these read LYAL…LVGV, WATL…AAIA, FVMT…LETF, and ALAA…AVWL. The Na(+) site is built by Gly86 and Thr89.

It belongs to the fluoride channel Fluc/FEX (TC 1.A.43) family.

The protein resides in the cell inner membrane. It carries out the reaction fluoride(in) = fluoride(out). Its activity is regulated as follows. Na(+) is not transported, but it plays an essential structural role and its presence is essential for fluoride channel function. Its function is as follows. Fluoride-specific ion channel. Important for reducing fluoride concentration in the cell, thus reducing its toxicity. The chain is Fluoride-specific ion channel FluC 1 from Rhodopseudomonas palustris (strain BisB18).